Here is a 282-residue protein sequence, read N- to C-terminus: 4-diphosphocytidyl-2-C-methyl-D-erythritol kinase (282 aa).

Lys-12 is a catalytic residue. 95-105 contributes to the ATP binding site; that stretch reads PMGGGIGGGSS. Asp-137 is an active-site residue.

Belongs to the GHMP kinase family. IspE subfamily.

It carries out the reaction 4-CDP-2-C-methyl-D-erythritol + ATP = 4-CDP-2-C-methyl-D-erythritol 2-phosphate + ADP + H(+). The protein operates within isoprenoid biosynthesis; isopentenyl diphosphate biosynthesis via DXP pathway; isopentenyl diphosphate from 1-deoxy-D-xylulose 5-phosphate: step 3/6. Functionally, catalyzes the phosphorylation of the position 2 hydroxy group of 4-diphosphocytidyl-2C-methyl-D-erythritol. This is 4-diphosphocytidyl-2-C-methyl-D-erythritol kinase from Pseudomonas aeruginosa (strain LESB58).